Here is a 167-residue protein sequence, read N- to C-terminus: MPRSQRNDNFIDKTFTIVADILLRVIPTTQREKEAFTYYRDGMSAQSEGEYAEALQNYYEAMRLEIDPYDRSYILYNIGLIHTSNGEHAKAIEYYLQALERNPSLPQAFNNMAVICHYRGEQAVEKEDLETSEAWFDQAADYWKQAIALAPNNYIEAQNWLKNTRRL.

3 TPR repeats span residues 35–68 (AFTY…EIDP), 72–105 (SYIL…NPSL), and 120–153 (GEQA…APNN).

It belongs to the Ycf3 family.

It is found in the plastid. The protein resides in the chloroplast thylakoid membrane. In terms of biological role, essential for the assembly of the photosystem I (PSI) complex. May act as a chaperone-like factor to guide the assembly of the PSI subunits. This chain is Photosystem I assembly protein Ycf3, found in Zygnema circumcarinatum (Green alga).